Consider the following 178-residue polypeptide: ATP synthase subunit delta (178 aa).

The protein belongs to the ATPase delta chain family. As to quaternary structure, F-type ATPases have 2 components, F(1) - the catalytic core - and F(0) - the membrane proton channel. F(1) has five subunits: alpha(3), beta(3), gamma(1), delta(1), epsilon(1). F(0) has three main subunits: a(1), b(2) and c(10-14). The alpha and beta chains form an alternating ring which encloses part of the gamma chain. F(1) is attached to F(0) by a central stalk formed by the gamma and epsilon chains, while a peripheral stalk is formed by the delta and b chains.

The protein localises to the cell inner membrane. Functionally, f(1)F(0) ATP synthase produces ATP from ADP in the presence of a proton or sodium gradient. F-type ATPases consist of two structural domains, F(1) containing the extramembraneous catalytic core and F(0) containing the membrane proton channel, linked together by a central stalk and a peripheral stalk. During catalysis, ATP synthesis in the catalytic domain of F(1) is coupled via a rotary mechanism of the central stalk subunits to proton translocation. This protein is part of the stalk that links CF(0) to CF(1). It either transmits conformational changes from CF(0) to CF(1) or is implicated in proton conduction. The polypeptide is ATP synthase subunit delta (Azotobacter vinelandii (strain DJ / ATCC BAA-1303)).